The chain runs to 130 residues: Large ribosomal subunit protein bL12c (130 aa).

The protein belongs to the bacterial ribosomal protein bL12 family. Homodimer. Part of the ribosomal stalk of the 50S ribosomal subunit. Forms a multimeric L10(L12)X complex, where L10 forms an elongated spine to which 2 to 4 L12 dimers bind in a sequential fashion. Binds GTP-bound translation factors.

It is found in the plastid. Its function is as follows. Forms part of the ribosomal stalk which helps the ribosome interact with GTP-bound translation factors. Is thus essential for accurate translation. In Prototheca wickerhamii, this protein is Large ribosomal subunit protein bL12c.